The sequence spans 620 residues: GTP-binding protein At3g49725, chloroplastic (620 aa).

The N-terminal 65 residues, 1-65, are a transit peptide targeting the chloroplast; that stretch reads MSVTTSFGIW…SSFLARDRLR (65 aa). A disordered region spans residues 57 to 100; the sequence is SFLARDRLRSKTPSSSPFSSKRHTPKTSEIEEESTPKDSVLLNP. In terms of domain architecture, Hflx-type G spans 346-585; sequence GTIAVVGYTN…LIDDKMKEKK (240 aa). Residues 352–359, 377–381, 399–402, and 468–471 contribute to the GTP site; these read GYTNAGKS, FATLD, DTVG, and NKID. Mg(2+)-binding residues include S359 and T379. Composition is skewed to acidic residues over residues 478–497 and 511–521; these read EEEK…EDEA and TVDEDQIQNGD. Residues 478–521 are disordered; that stretch reads EEEKYLDDGEGVGEEDEDEADLKAEETVDASEATVDEDQIQNGD. 563–565 is a binding site for GTP; it reads SAL. Positions 597-620 are disordered; the sequence is LHKRKWRPPRNDDEEERLIPLDQR.

The protein belongs to the TRAFAC class OBG-HflX-like GTPase superfamily. HflX GTPase family. Mg(2+) serves as cofactor.

Its subcellular location is the plastid. It localises to the chloroplast. The sequence is that of GTP-binding protein At3g49725, chloroplastic from Arabidopsis thaliana (Mouse-ear cress).